Reading from the N-terminus, the 340-residue chain is Eukaryotic translation initiation factor 3 subunit I (340 aa).

WD repeat units follow at residues G8–T47, G50–D91, C150–N189, E194–T233, and G291–M330.

This sequence belongs to the eIF-3 subunit I family. In terms of assembly, component of the eukaryotic translation initiation factor 3 (eIF-3) complex.

It is found in the cytoplasm. Functionally, component of the eukaryotic translation initiation factor 3 (eIF-3) complex, which is involved in protein synthesis of a specialized repertoire of mRNAs and, together with other initiation factors, stimulates binding of mRNA and methionyl-tRNAi to the 40S ribosome. The eIF-3 complex specifically targets and initiates translation of a subset of mRNAs involved in cell proliferation. The chain is Eukaryotic translation initiation factor 3 subunit I (tif34) from Neosartorya fischeri (strain ATCC 1020 / DSM 3700 / CBS 544.65 / FGSC A1164 / JCM 1740 / NRRL 181 / WB 181) (Aspergillus fischerianus).